Reading from the N-terminus, the 37-residue chain is Large ribosomal subunit protein bL36 (37 aa).

It belongs to the bacterial ribosomal protein bL36 family.

This chain is Large ribosomal subunit protein bL36, found in Deinococcus deserti (strain DSM 17065 / CIP 109153 / LMG 22923 / VCD115).